The chain runs to 426 residues: Serine--tRNA ligase (426 aa).

L-serine is bound at residue 233 to 235 (TSE). ATP is bound at residue 264-266 (RSE). Glu287 contributes to the L-serine binding site. Residue 351–354 (EISS) coordinates ATP. L-serine is bound at residue Ser387.

The protein belongs to the class-II aminoacyl-tRNA synthetase family. Type-1 seryl-tRNA synthetase subfamily. In terms of assembly, homodimer. The tRNA molecule binds across the dimer.

The protein localises to the cytoplasm. The enzyme catalyses tRNA(Ser) + L-serine + ATP = L-seryl-tRNA(Ser) + AMP + diphosphate + H(+). It catalyses the reaction tRNA(Sec) + L-serine + ATP = L-seryl-tRNA(Sec) + AMP + diphosphate + H(+). Its pathway is aminoacyl-tRNA biosynthesis; selenocysteinyl-tRNA(Sec) biosynthesis; L-seryl-tRNA(Sec) from L-serine and tRNA(Sec): step 1/1. Its function is as follows. Catalyzes the attachment of serine to tRNA(Ser). Is also able to aminoacylate tRNA(Sec) with serine, to form the misacylated tRNA L-seryl-tRNA(Sec), which will be further converted into selenocysteinyl-tRNA(Sec). The sequence is that of Serine--tRNA ligase from Xylella fastidiosa (strain M23).